A 2335-amino-acid chain; its full sequence is Histone-lysine N-methyltransferase ATXR3 (2335 aa).

Disordered regions lie at residues 30 to 142 (NESK…FKDE), 332 to 355 (STGNRLKRHGAEPDSIERKHSYAD), 371 to 556 (CSRS…SSSK), and 902 to 961 (DQVP…KTDT). Composition is skewed to polar residues over residues 31–46 (ESKTAATTENGHTSIA) and 53–62 (QPANKPSASS). Positions 65-84 (VKKKRIVKVIRKVVKRRPKQ) are enriched in basic residues. The short motif at 67–74 (KKRIVKVI) is the Nuclear localization signal 1 element. The segment covering 97–112 (PPSQVVQLPAESQLQI) has biased composition (polar residues). 3 stretches are compositionally biased toward basic and acidic residues: residues 340 to 353 (HGAEPDSIERKHSY), 371 to 390 (CSRSLHSDHYSQHSAERLYR), and 430 to 452 (WSPHDRSRYHENRDRSPYARERS). A compositionally biased stretch (basic residues) spans 461–475 (HARKRSPRDRRHHDY). 3 stretches are compositionally biased toward basic and acidic residues: residues 485-498 (SPHDRSRPSDRRDY), 507-548 (QSDR…ESNG), and 910-921 (PRAKVRSKERCP). The short motif at 527–534 (ERRDCQTG) is the Nuclear localization signal 2 element. Over residues 922 to 932 (SRPARPSPASS) the composition is skewed to low complexity. A compositionally biased stretch (polar residues) spans 941–961 (SHSQSTASTGQDSQGLWKTDT). The Nuclear localization signal 3 signature appears at 1382–1389 (ARRSSAIL). Positions 1532 to 1572 (NRKSFSSESDTSSELSDNGKSDNYSSASASESESDIRSEGR) are disordered. Over residues 1535–1547 (SFSSESDTSSELS) the composition is skewed to low complexity. The 140-residue stretch at 1765-1904 (KEIESRSDDK…YGEEITFDYN (140 aa)) folds into the SET domain. Position 1868 (cysteine 1868) interacts with Zn(2+). Tyrosine 1903 lines the S-adenosyl-L-methionine pocket. The Post-SET domain maps to 1914–1930 (EASVCLCGSQVCRGSYL). Residues cysteine 1918, cysteine 1920, and cysteine 1925 each coordinate Zn(2+).

Belongs to the class V-like SAM-binding methyltransferase superfamily. Histone-lysine methyltransferase family. TRX/MLL subfamily. Expressed in roots, leaves, stems and inflorescences.

It localises to the nucleus. It catalyses the reaction L-lysyl(4)-[histone H3] + 3 S-adenosyl-L-methionine = N(6),N(6),N(6)-trimethyl-L-lysyl(4)-[histone H3] + 3 S-adenosyl-L-homocysteine + 3 H(+). Its function is as follows. Histone methyltransferase specifically required for trimethylation of 'Lys-4' of histone H3 (H3K4me3) and is crucial for both sporophyte and gametophyte development. Function as a diurnal 'writer' to counteract the nocturne 'eraser' demethylase activity of JMJ14 thus orchestrating the circadian rhythm of histone modifications (e.g. H3K4me3) and modulating the rhythmic expression of diurnal target genes; this mechanism relies also on the circadian clock oscillators CCA1 and LHY. The protein is Histone-lysine N-methyltransferase ATXR3 of Arabidopsis thaliana (Mouse-ear cress).